Reading from the N-terminus, the 185-residue chain is Large ribosomal subunit protein uL5 (185 aa).

Belongs to the universal ribosomal protein uL5 family. As to quaternary structure, part of the 50S ribosomal subunit; part of the 5S rRNA/L5/L18/L25 subcomplex. Contacts the 5S rRNA and the P site tRNA. Forms a bridge to the 30S subunit in the 70S ribosome.

In terms of biological role, this is one of the proteins that bind and probably mediate the attachment of the 5S RNA into the large ribosomal subunit, where it forms part of the central protuberance. In the 70S ribosome it contacts protein S13 of the 30S subunit (bridge B1b), connecting the 2 subunits; this bridge is implicated in subunit movement. Contacts the P site tRNA; the 5S rRNA and some of its associated proteins might help stabilize positioning of ribosome-bound tRNAs. This chain is Large ribosomal subunit protein uL5, found in Rhodopseudomonas palustris (strain HaA2).